Here is a 166-residue protein sequence, read N- to C-terminus: Regulatory protein RecX (166 aa).

The protein belongs to the RecX family.

It localises to the cytoplasm. Modulates RecA activity. This Salmonella choleraesuis (strain SC-B67) protein is Regulatory protein RecX.